The following is a 300-amino-acid chain: Probable protein phosphatase 2C 3 (300 aa).

The PPM-type phosphatase domain maps to 23–298; that stretch reads IFAASEMQGW…DNMTTILVYL (276 aa). Positions 57, 58, 237, and 289 each coordinate Mn(2+).

Belongs to the PP2C family. It depends on Mg(2+) as a cofactor. Mn(2+) serves as cofactor.

Its subcellular location is the membrane. It carries out the reaction O-phospho-L-seryl-[protein] + H2O = L-seryl-[protein] + phosphate. The enzyme catalyses O-phospho-L-threonyl-[protein] + H2O = L-threonyl-[protein] + phosphate. Its function is as follows. Enzyme with a broad specificity. The chain is Probable protein phosphatase 2C 3 from Paramecium tetraurelia.